Reading from the N-terminus, the 364-residue chain is Serine/threonine-protein kinase ENV7 (364 aa).

3 S-palmitoyl cysteine lipidation sites follow: cysteine 13, cysteine 14, and cysteine 15. Residues 30–364 (YRIQRLLGEG…LLNLLQDLDT (335 aa)) enclose the Protein kinase domain. Residues 36–44 (LGEGGMSFV) and lysine 69 each bind ATP. Residue aspartate 215 is the Proton acceptor of the active site.

It belongs to the protein kinase superfamily. Ser/Thr protein kinase family.

It localises to the vacuole membrane. The enzyme catalyses L-seryl-[protein] + ATP = O-phospho-L-seryl-[protein] + ADP + H(+). It catalyses the reaction L-threonyl-[protein] + ATP = O-phospho-L-threonyl-[protein] + ADP + H(+). In terms of biological role, serine/threonine-protein kinase involved in vacuolar processing and morphology. The polypeptide is Serine/threonine-protein kinase ENV7 (ENV7) (Saccharomyces cerevisiae (strain ATCC 204508 / S288c) (Baker's yeast)).